A 110-amino-acid chain; its full sequence is Insulin-1 (110 aa).

An N-terminal signal peptide occupies residues 1 to 24 (MALWMRFLPLLALLVLWEPKPAQA). Disulfide bonds link C31/C96, C43/C109, and C95/C100. A propeptide spans 57–87 (EVEDPQVPQLELGGGPEAGDLQTLALEVARQ) (c peptide).

The protein belongs to the insulin family. In terms of assembly, heterodimer of a B chain and an A chain linked by two disulfide bonds.

It localises to the secreted. Functionally, insulin decreases blood glucose concentration. It increases cell permeability to monosaccharides, amino acids and fatty acids. It accelerates glycolysis, the pentose phosphate cycle, and glycogen synthesis in liver. In Rattus norvegicus (Rat), this protein is Insulin-1 (Ins1).